Here is a 321-residue protein sequence, read N- to C-terminus: Phosphoenolpyruvate transferase (321 aa).

7,8-didemethyl-8-hydroxy-5-deazariboflavin is bound at residue Asp51.

It belongs to the CofD family. As to quaternary structure, homodimer. Mg(2+) is required as a cofactor.

It catalyses the reaction enolpyruvoyl-2-diphospho-5'-guanosine + 7,8-didemethyl-8-hydroxy-5-deazariboflavin = dehydro coenzyme F420-0 + GMP + H(+). The protein operates within cofactor biosynthesis; coenzyme F420 biosynthesis. Functionally, catalyzes the transfer of the phosphoenolpyruvate moiety from enoylpyruvoyl-2-diphospho-5'-guanosine (EPPG) to 7,8-didemethyl-8-hydroxy-5-deazariboflavin (FO) with the formation of dehydro coenzyme F420-0 and GMP. This Kitasatospora aureofaciens (Streptomyces aureofaciens) protein is Phosphoenolpyruvate transferase.